Here is a 104-residue protein sequence, read N- to C-terminus: ATP-dependent Clp protease adapter protein ClpS (104 aa).

Belongs to the ClpS family. Binds to the N-terminal domain of the chaperone ClpA.

Functionally, involved in the modulation of the specificity of the ClpAP-mediated ATP-dependent protein degradation. This is ATP-dependent Clp protease adapter protein ClpS from Oleidesulfovibrio alaskensis (strain ATCC BAA-1058 / DSM 17464 / G20) (Desulfovibrio alaskensis).